Here is a 723-residue protein sequence, read N- to C-terminus: Aminodeoxychorismate synthase (723 aa).

The Glutamine amidotransferase type-1 domain occupies 2 to 195 (RTLLVDNYDS…RDLTERHGRT (194 aa)). C82 (nucleophile) is an active-site residue. A disordered region spans residues 96–117 (VGRAPEPRHGRTSAVRHDGTGL). The segment covering 98–114 (RAPEPRHGRTSAVRHDG) has biased composition (basic and acidic residues). Active-site residues include H169 and E171. Disordered stretches follow at residues 192–219 (HGRT…KATT) and 693–723 (FPGR…VLPG). Residues 255–723 (LDSSRPGGEL…GAPKDLVLPG (469 aa)) are PABB component. A compositionally biased stretch (basic and acidic residues) spans 695 to 704 (GRERPGKDLD).

The protein in the C-terminal section; belongs to the anthranilate synthase component I family.

It carries out the reaction chorismate + L-glutamine = 4-amino-4-deoxychorismate + L-glutamate. Its pathway is antibiotic biosynthesis; candicidin biosynthesis. Functionally, involved in candicidin biosynthesis. Catalyzes the biosynthesis of 4-amino-4-deoxychorismate (ADC) from chorismate and glutamine. The chain is Aminodeoxychorismate synthase from Streptomyces griseus.